Here is a 188-residue protein sequence, read N- to C-terminus: Quinone reductase (188 aa).

Residues 13–20 (SLRKGSFN), 82–85 (EYNY), and serine 117 contribute to the FMN site.

It belongs to the SsuE family. Homotetramer. Dimer of dimers. The tetrameric configuration has a central role in chromate reductase activity. FMN is required as a cofactor.

It carries out the reaction a quinone + NADH + H(+) = a quinol + NAD(+). It catalyses the reaction a quinone + NADPH + H(+) = a quinol + NADP(+). The enzyme catalyses Cr(6+) + 2 NADH + O2 = Cr(3+) + superoxide + 2 NAD(+) + 2 H(+). The catalysed reaction is Cr(6+) + 2 NADPH + O2 = Cr(3+) + superoxide + 2 NADP(+) + 2 H(+). Functionally, catalyzes the reduction of quinones. Acts by simultaneous two-electron transfer, avoiding formation of highly reactive semiquinone intermediates and producing quinols that promote tolerance of H(2)O(2). Quinone reduction is probably the primary biological role of ChrR. Can also reduce toxic chromate to insoluble and less toxic Cr(3+). Catalyzes the transfer of three electrons to Cr(6+) producing Cr(3+) and one electron to molecular oxygen without producing the toxic Cr(5+) species and only producing a minimal amount of reactive oxygen species (ROS). Chromate reduction protects the cell against chromate toxicity, but is likely a secondary activity. The sequence is that of Quinone reductase (chrR) from Escherichia coli O157:H7.